The primary structure comprises 283 residues: MDVQDLKPPKPLYLERVGFRGVRRRALLETPEGPVTLDLELDVFVDLDRSKRGVHLSRNIEAVEAVVSERRARSIEGLLRSIAKELLSRHGYAEKATVRARTRYYIDLEAAGVKGREPVDVAVTVSLTRSGGERWRVAVSVKGMTVCPSAQSTIAEAEGISDPSRAPSHSQKVLLKGTVDTGKVMVRIEDLARALLQSFSAPTFTLLKKPQEARLILEAFTRPMFVEDVVREAAWRIAAIPYIPGEALLQVEAVSLESIHPHDLVAMLRSRVSEVRSLASRSV.

This sequence belongs to the GTP cyclohydrolase IV family. Homodimer. It depends on Fe(2+) as a cofactor.

It catalyses the reaction GTP + H2O = 7,8-dihydroneopterin 2',3'-cyclic phosphate + formate + diphosphate + H(+). The protein operates within cofactor biosynthesis; 5,6,7,8-tetrahydromethanopterin biosynthesis. Functionally, converts GTP to 7,8-dihydro-D-neopterin 2',3'-cyclic phosphate, the first intermediate in the biosynthesis of coenzyme methanopterin. This chain is GTP cyclohydrolase MptA, found in Aeropyrum pernix (strain ATCC 700893 / DSM 11879 / JCM 9820 / NBRC 100138 / K1).